The sequence spans 473 residues: Photosystem II CP43 reaction center protein (473 aa).

Positions 1–14 (MKTLYSLRRSYPVE) are excised as a propeptide. N-acetylthreonine is present on Thr15. Phosphothreonine is present on Thr15. 5 consecutive transmembrane segments (helical) span residues 69–93 (LFEVAHFVPEKPMYEQGLILLPHLA), 134–155 (LIGPETLEESFPFFGYVWKDKN), 178–200 (KALYFGGLYDTWAPGGGDVRKIT), 255–275 (KPFAWARRAFVWSGEAYLSYS), and 291–312 (WFNNTAYPSEFYGPTGPEASQA). Glu367 is a [CaMn4O5] cluster binding site. Residues 447 to 471 (RARAAAAGFEKGIDRDTEPVLFMNP) traverse the membrane as a helical segment.

The protein belongs to the PsbB/PsbC family. PsbC subfamily. In terms of assembly, PSII is composed of 1 copy each of membrane proteins PsbA, PsbB, PsbC, PsbD, PsbE, PsbF, PsbH, PsbI, PsbJ, PsbK, PsbL, PsbM, PsbT, PsbX, PsbY, PsbZ, Psb30/Ycf12, at least 3 peripheral proteins of the oxygen-evolving complex and a large number of cofactors. It forms dimeric complexes. The cofactor is Binds multiple chlorophylls and provides some of the ligands for the Ca-4Mn-5O cluster of the oxygen-evolving complex. It may also provide a ligand for a Cl- that is required for oxygen evolution. PSII binds additional chlorophylls, carotenoids and specific lipids..

Its subcellular location is the plastid. It is found in the chloroplast thylakoid membrane. Functionally, one of the components of the core complex of photosystem II (PSII). It binds chlorophyll and helps catalyze the primary light-induced photochemical processes of PSII. PSII is a light-driven water:plastoquinone oxidoreductase, using light energy to abstract electrons from H(2)O, generating O(2) and a proton gradient subsequently used for ATP formation. The chain is Photosystem II CP43 reaction center protein from Zygnema circumcarinatum (Green alga).